Here is a 699-residue protein sequence, read N- to C-terminus: DNA ligase (699 aa).

The disordered stretch occupies residues Met-1–Arg-20. NAD(+) contacts are provided by residues Asp-43–Asp-47, Ser-92–Leu-93, and Glu-126. Lys-128 (N6-AMP-lysine intermediate) is an active-site residue. NAD(+) contacts are provided by Arg-149, Glu-185, Lys-301, and Lys-325. Residues Cys-419, Cys-422, Cys-443, and Cys-449 each contribute to the Zn(2+) site. The 79-residue stretch at Ala-621–Glu-699 folds into the BRCT domain.

Belongs to the NAD-dependent DNA ligase family. LigA subfamily. Requires Mg(2+) as cofactor. Mn(2+) serves as cofactor.

The enzyme catalyses NAD(+) + (deoxyribonucleotide)n-3'-hydroxyl + 5'-phospho-(deoxyribonucleotide)m = (deoxyribonucleotide)n+m + AMP + beta-nicotinamide D-nucleotide.. In terms of biological role, DNA ligase that catalyzes the formation of phosphodiester linkages between 5'-phosphoryl and 3'-hydroxyl groups in double-stranded DNA using NAD as a coenzyme and as the energy source for the reaction. It is essential for DNA replication and repair of damaged DNA. This Beijerinckia indica subsp. indica (strain ATCC 9039 / DSM 1715 / NCIMB 8712) protein is DNA ligase.